The chain runs to 310 residues: Oxygen-dependent coproporphyrinogen-III oxidase (310 aa).

Ser-92 contributes to the substrate binding site. His-96 and His-106 together coordinate a divalent metal cation. The Proton donor role is filled by His-106. Residue Asn-108–Arg-110 coordinates substrate. Positions 145 and 175 each coordinate a divalent metal cation. Residues Tyr-240 to Glu-275 form an important for dimerization region. Substrate is bound at residue Gly-258–Arg-260.

The protein belongs to the aerobic coproporphyrinogen-III oxidase family. Homodimer. A divalent metal cation is required as a cofactor.

The protein localises to the cytoplasm. It catalyses the reaction coproporphyrinogen III + O2 + 2 H(+) = protoporphyrinogen IX + 2 CO2 + 2 H2O. It participates in porphyrin-containing compound metabolism; protoporphyrin-IX biosynthesis; protoporphyrinogen-IX from coproporphyrinogen-III (O2 route): step 1/1. In terms of biological role, involved in the heme biosynthesis. Catalyzes the aerobic oxidative decarboxylation of propionate groups of rings A and B of coproporphyrinogen-III to yield the vinyl groups in protoporphyrinogen-IX. This chain is Oxygen-dependent coproporphyrinogen-III oxidase, found in Pectobacterium atrosepticum (strain SCRI 1043 / ATCC BAA-672) (Erwinia carotovora subsp. atroseptica).